The following is a 259-amino-acid chain: Protein SODIUM POTASSIUM ROOT DEFECTIVE 2 (259 aa).

A disordered region spans residues 141–165 (PDSITGSVDQDPAKTVEAEAPAGED). Basic and acidic residues predominate over residues 151-165 (DPAKTVEAEAPAGED). The HMA domain maps to 180-246 (QQVVVLKVSL…KVKNAQFWTN (67 aa)). Cys191 and Cys194 together coordinate a metal cation.

This Arabidopsis thaliana (Mouse-ear cress) protein is Protein SODIUM POTASSIUM ROOT DEFECTIVE 2.